A 1902-amino-acid chain; its full sequence is Plexin-B3 (1902 aa).

An N-terminal signal peptide occupies residues 1 to 36 (MLTDFLQAPVMAPWSPFSLHLLLLFLPLLPLTRVHR). The region spanning 37-461 (FSVPNTSFNH…TAQQVDRILV (425 aa)) is the Sema domain. Residues 37-1245 (FSVPNTSFNH…MMSTFPVEAQ (1209 aa)) lie on the Extracellular side of the membrane. Asparagine 41 is a glycosylation site (N-linked (GlcNAc...) asparagine). Disulfide bonds link cysteine 88–cysteine 97 and cysteine 122–cysteine 130. N-linked (GlcNAc...) asparagine glycosylation is present at asparagine 221. Disulfide bonds link cysteine 257–cysteine 360, cysteine 273–cysteine 305, and cysteine 323–cysteine 347. Residues 353–372 (DSPESYPCGDEHTPSPIAGR) are disordered. Residues asparagine 416 and asparagine 469 are each glycosylated (N-linked (GlcNAc...) asparagine). One can recognise a PSI 1 domain in the interval 463-515 (ACPQFPNCTTCLQARDPLCGWCILQGRCTRRGECGRAAQPNHWLWSYEDNHCP). 5 disulfide bridges follow: cysteine 464–cysteine 481, cysteine 470–cysteine 514, cysteine 473–cysteine 490, cysteine 484–cysteine 496, and cysteine 551–cysteine 569. 2 PSI domains span residues 609-671 (DCSA…EACP) and 776-822 (DCAM…QLCP). N-linked (GlcNAc...) asparagine glycosylation is found at asparagine 791, asparagine 889, asparagine 910, asparagine 946, asparagine 1090, and asparagine 1207. IPT/TIG domains lie at 823-914 (IPSI…FTYQ), 915-1001 (DPVL…FRYT), 1003-1134 (NPQL…FLYQ), and 1154-1221 (KPGH…QMGN). A helical membrane pass occupies residues 1246–1266 (LGLGMGAAVLIAAVLLLTLMY). The Cytoplasmic portion of the chain corresponds to 1267 to 1902 (RHKSKKALRD…ALVEYKVTDL (636 aa)).

Belongs to the plexin family. Binds MET and MST1R. Interacts with RIT2/RIN. May form homodimers (via Sema domain). Interacts (via cytoplasmic domain) with FSCN1, ARHGDIA and RAC1. Expressed in brain (at protein level). In cerebellum, strongest expression detected in Purkinje and granular cells. Detected at very low levels in several fetal tissues, including dorsal root ganglia (DRG), heart, lung, optic bulb, brain and liver.

The protein localises to the cell membrane. Functionally, receptor for SEMA5A that plays a role in axon guidance, invasive growth and cell migration. Stimulates neurite outgrowth and mediates Ca(2+)/Mg(2+)-dependent cell aggregation. In glioma cells, SEMA5A stimulation of PLXNB3 results in the disassembly of F-actin stress fibers, disruption of focal adhesions and cellular collapse as well as inhibition of cell migration and invasion through ARHGDIA-mediated inactivation of RAC1. Seem to be non-essential for normal development and function of the central nervous system. This chain is Plexin-B3 (Plxnb3), found in Mus musculus (Mouse).